The sequence spans 383 residues: Cytochrome b (383 aa).

4 consecutive transmembrane segments (helical) span residues 34 to 54 (FGSL…FLMM), 78 to 99 (WLIR…FLHI), 114 to 134 (WNVG…GYVL), and 179 to 199 (FTAL…THLI). Residues histidine 84 and histidine 98 each contribute to the heme b site. Positions 183 and 197 each coordinate heme b. Residue histidine 202 participates in a ubiquinone binding. 4 helical membrane passes run 227-247 (MKDV…ALYL), 289-309 (LGGV…PFLH), 321-341 (LSQL…WIGG), and 348-368 (YILL…ILMP).

This sequence belongs to the cytochrome b family. The cytochrome bc1 complex contains 3 respiratory subunits (MT-CYB, CYC1 and UQCRFS1), 2 core proteins (UQCRC1 and UQCRC2) and probably 6 low-molecular weight proteins. It depends on heme b as a cofactor.

The protein resides in the mitochondrion inner membrane. In terms of biological role, component of the ubiquinol-cytochrome c reductase complex (complex III or cytochrome b-c1 complex) that is part of the mitochondrial respiratory chain. The b-c1 complex mediates electron transfer from ubiquinol to cytochrome c. Contributes to the generation of a proton gradient across the mitochondrial membrane that is then used for ATP synthesis. This Caiman crocodilus (Spectacled caiman) protein is Cytochrome b (MT-CYB).